The chain runs to 188 residues: MDADLDTLLADLQRRMDGAMETLKREFSGLRTGRANPALLDPVKVEAYGTLMPLNQVATVAVPESRMLTVQVWDRGMVNATVAAIRDCGLGLNPQPDGQLIRVPLPLLTEERRNELARAAGKYAEGARVAVRGVRRDGMETIKGFEKKHQIGEDQGRDWADRVQKLTDATIKKIDELLVEKEKDIRQV.

The protein belongs to the RRF family.

It localises to the cytoplasm. Its function is as follows. Responsible for the release of ribosomes from messenger RNA at the termination of protein biosynthesis. May increase the efficiency of translation by recycling ribosomes from one round of translation to another. The protein is Ribosome-recycling factor of Acidiphilium cryptum (strain JF-5).